Consider the following 453-residue polypeptide: Carbamoyl phosphate synthase arginine-specific small chain (453 aa).

A mitochondrion-targeting transit peptide spans 1–33 (MFSRLAARLPKASALNGVAARQVRNLSQPAITG). Residues 26–50 (LSQPAITGSKGRNMPAREPRTTAAA) form a disordered region. Residues serine 97, glycine 280, and glycine 282 each contribute to the L-glutamine site. A Glutamine amidotransferase type-1 domain is found at 233–420 (HVALIDCGVK…MENVELFKSN (188 aa)). The active-site Nucleophile is the cysteine 309. Positions 310, 313, 351, 353, and 354 each coordinate L-glutamine. Residues histidine 393 and glutamate 395 contribute to the active site.

Belongs to the CarA family. In terms of assembly, heterodimer composed of 2 chains; the small (or glutamine) chain promotes the hydrolysis of glutamine to ammonia, which is used by the large (or ammonia) chain to synthesize carbamoyl phosphate.

It is found in the mitochondrion matrix. The enzyme catalyses hydrogencarbonate + L-glutamine + 2 ATP + H2O = carbamoyl phosphate + L-glutamate + 2 ADP + phosphate + 2 H(+). It catalyses the reaction L-glutamine + H2O = L-glutamate + NH4(+). Its pathway is amino-acid biosynthesis; L-arginine biosynthesis; carbamoyl phosphate from bicarbonate: step 1/1. Its function is as follows. Small subunit of the arginine-specific carbamoyl phosphate synthase (CPSase). CPSase catalyzes the formation of carbamoyl phosphate from the ammonia moiety of glutamine, carbonate, and phosphate donated by ATP, the first step of the arginine biosynthetic pathway. The small subunit (glutamine amidotransferase) binds and cleaves glutamine to supply the large subunit with the substrate ammonia. The polypeptide is Carbamoyl phosphate synthase arginine-specific small chain (arg-2) (Neurospora crassa (strain ATCC 24698 / 74-OR23-1A / CBS 708.71 / DSM 1257 / FGSC 987)).